Reading from the N-terminus, the 670-residue chain is tRNA 5-methylaminomethyl-2-thiouridine biosynthesis bifunctional protein MnmC (670 aa).

A tRNA (mnm(5)s(2)U34)-methyltransferase region spans residues 1–242 (MTFSVQHAEI…KRECLSGLKI (242 aa)). Positions 269–670 (IGGGIASLCA…KKWLKGSKVE (402 aa)) are FAD-dependent cmnm(5)s(2)U34 oxidoreductase.

In the N-terminal section; belongs to the methyltransferase superfamily. tRNA (mnm(5)s(2)U34)-methyltransferase family. The protein in the C-terminal section; belongs to the DAO family. FAD serves as cofactor.

It localises to the cytoplasm. It carries out the reaction 5-aminomethyl-2-thiouridine(34) in tRNA + S-adenosyl-L-methionine = 5-methylaminomethyl-2-thiouridine(34) in tRNA + S-adenosyl-L-homocysteine + H(+). In terms of biological role, catalyzes the last two steps in the biosynthesis of 5-methylaminomethyl-2-thiouridine (mnm(5)s(2)U) at the wobble position (U34) in tRNA. Catalyzes the FAD-dependent demodification of cmnm(5)s(2)U34 to nm(5)s(2)U34, followed by the transfer of a methyl group from S-adenosyl-L-methionine to nm(5)s(2)U34, to form mnm(5)s(2)U34. The protein is tRNA 5-methylaminomethyl-2-thiouridine biosynthesis bifunctional protein MnmC of Haemophilus influenzae (strain PittGG).